A 117-amino-acid chain; its full sequence is V-type proton ATPase subunit G (117 aa).

Belongs to the V-ATPase G subunit family. V-ATPase is a heteromultimeric enzyme made up of two complexes: the ATP-hydrolytic V1 complex and the proton translocation V0 complex. The V1 complex consists of three catalytic AB heterodimers that form a heterohexamer, three peripheral stalks each consisting of EG heterodimers, one central rotor including subunits D and F, and the regulatory subunits C and H. The proton translocation complex V0 consists of the proton transport subunit a, a ring of proteolipid subunits c9c'', rotary subunit d, subunits e and f, and the accessory subunits VhaAC45 and ATP6AP2.

Its function is as follows. Subunit of the V1 complex of vacuolar(H+)-ATPase (V-ATPase), a multisubunit enzyme composed of a peripheral complex (V1) that hydrolyzes ATP and a membrane integral complex (V0) that translocates protons. V-ATPase is responsible for acidifying and maintaining the pH of intracellular compartments and in some cell types, is targeted to the plasma membrane, where it is responsible for acidifying the extracellular environment. In enterocytes, acts as part of a pHCl-2 sensory pathway which mediates Tor-dependent larval growth and metabolism in response to zinc availability. Likely acts in maintaining enterocyte lysosomal acidification which consequently promotes Tor activation at the lysosome membrane. The protein is V-type proton ATPase subunit G (Vha13) of Drosophila melanogaster (Fruit fly).